The sequence spans 672 residues: UvrABC system protein B (672 aa).

One can recognise a Helicase ATP-binding domain in the interval 26 to 181 (AGLEDGLAYQ…ILQRLAELQY (156 aa)). 39-46 (GVTGSGKT) is an ATP binding site. Residues 92–115 (YYDYYQPEAYVPSSDTYIEKDASI) carry the Beta-hairpin motif. In terms of domain architecture, Helicase C-terminal spans 430–592 (QVDDLLSEIK…ITPKSIQKAV (163 aa)). Positions 631 to 666 (AKELRKLEEQMYHHARNLEFEEAAAVRDKIQHIRKG) constitute a UVR domain.

Belongs to the UvrB family. Forms a heterotetramer with UvrA during the search for lesions. Interacts with UvrC in an incision complex.

The protein resides in the cytoplasm. Functionally, the UvrABC repair system catalyzes the recognition and processing of DNA lesions. A damage recognition complex composed of 2 UvrA and 2 UvrB subunits scans DNA for abnormalities. Upon binding of the UvrA(2)B(2) complex to a putative damaged site, the DNA wraps around one UvrB monomer. DNA wrap is dependent on ATP binding by UvrB and probably causes local melting of the DNA helix, facilitating insertion of UvrB beta-hairpin between the DNA strands. Then UvrB probes one DNA strand for the presence of a lesion. If a lesion is found the UvrA subunits dissociate and the UvrB-DNA preincision complex is formed. This complex is subsequently bound by UvrC and the second UvrB is released. If no lesion is found, the DNA wraps around the other UvrB subunit that will check the other stand for damage. The protein is UvrABC system protein B of Coxiella burnetii (strain CbuG_Q212) (Coxiella burnetii (strain Q212)).